A 390-amino-acid polypeptide reads, in one-letter code: GLH-binding kinase 1 (390 aa).

The Protein kinase domain occupies 38 to 338; that stretch reads YVNLSFLNAG…VEDALNHPYV (301 aa). Residues 44-52 and Lys67 contribute to the ATP site; that span reads LNAGAQGTV. The active-site Proton acceptor is Asp164. Ser198 bears the Phosphoserine mark. Residue Tyr200 is modified to Phosphotyrosine.

This sequence belongs to the protein kinase superfamily. CMGC Ser/Thr protein kinase family. MAP kinase subfamily. In terms of assembly, interacts with glh-1, glh-2 (via C-terminus), glh-3 (via C-terminus) and glh-4 (via C-terminus). Interacts with csn-5; the interaction may prevent glh-1 degradation induced by kgb-1. Interacts with fos-1. Mg(2+) serves as cofactor. May be phosphorylated by mek-1 on Ser-198 and/or Tyr-200. Phosphorylation is induced upon Cu(2+) and arsenite-mediated cell stimulation and by fasting. Expressed in somatic and germline tissues.

Its subcellular location is the cytoplasm. The enzyme catalyses L-seryl-[protein] + ATP = O-phospho-L-seryl-[protein] + ADP + H(+). It carries out the reaction L-threonyl-[protein] + ATP = O-phospho-L-threonyl-[protein] + ADP + H(+). Activated by mek-1 mediated phosphorylation. No differences in basal activation between larvae and adults. Inhibited by phosphatase vhp-1. In terms of biological role, mitogen-activated protein kinase which is an essential component of the JNK pathway composed of mlk-1, mek-1 and kgb-1. Phosphorylates the transcription factor fos-1 which prevents fos-1 dimerization and promoter binding and results in activation of target genes including F53A9.2/kreg-1 and lys-3/kreg-2. Phosphorylates jun-1 and activates the AP-1 transcription factor which is a heterodimer of jun-1 and fos-1. Phosphorylates glh-1 in vitro which may play a role in controlling glh-1 protein levels in the germline by targeting it for degradation by the proteasome. Required for oogenesis and probably also for spermatogenesis. Involved in the response to environmental stress such as heavy metals, infection and protein folding stress in an age-dependent manner. In larvae, has a protective role which becomes detrimental in adults. May control susceptibility to infection, heavy metal stress and premature lethality by regulating daf-16 cellular localization. Involved in the transcriptional response to bacterial pore-forming toxins and to fasting. Required for fasting-induced longevity. Involved in axon regeneration after injury downstream of tyrosine receptor svh-2. The chain is GLH-binding kinase 1 from Caenorhabditis elegans.